Consider the following 832-residue polypeptide: WD repeat-containing protein 75 (832 aa).

WD repeat units lie at residues 4–43 (KTDIRVVRCGGSKINFRPPIISHDSRFVLCVSGDSVKVYS), 47–86 (EEWLHNLQGHNNQVTGIAFNPANQLQVYSCSADGTVKLWD), 90–134 (GILI…QLVA), 148–187 (KELSTVASKISPNPSCTAFGRGGEFIAFSRHLQLNVYFFR), 196–233 (LKATDKKAGKNAFTCVACHPTDDCIASGHEDGKIRLWR), 239–278 (KEYTYSTKHWHHDAVNHLCFTPEGSNLLSGGIESVLVQWQ), 281–320 (DMSKKEFLPRLGGSISHVSASADGQLFCTAHSDNKISIIE), 326–364 (SGLIQGLVRGDAVSTDLMIDPRSKALVLNGKPGHLQFYS), 378–425 (QQEY…KLWA), 432–474 (SFVL…KAWC), 485–523 (YWSCDFVGSYHNLKPKNCCFSADGSILAVSFQEVLTLWS), 527–567 (WELL…CCWN), and 572–609 (ALEWSTSVDVSRLQSDPLSENVAAFSFESKHTHLFVFK). 2 disordered regions span residues 704–723 (QHKLNTETQEPADKPQHTQG) and 759–811 (VREE…AQER). Residues 764–785 (DSSEQEMDSEKEEEESEEEMEA) show a composition bias toward acidic residues. Basic and acidic residues predominate over residues 799 to 811 (DEQKPKLSKAQER).

Component of the proposed t-UTP subcomplex of the ribosomal small subunit (SSU) processome. SSU processome is composed of more than 70 proteins and the RNA chaperone small nucleolar RNA (snoRNA) U3.

The protein resides in the nucleus. Its subcellular location is the nucleolus. In terms of biological role, ribosome biogenesis factor. Part of the small subunit (SSU) processome, first precursor of the small eukaryotic ribosomal subunit. During the assembly of the SSU processome in the nucleolus, many ribosome biogenesis factors, an RNA chaperone and ribosomal proteins associate with the nascent pre-rRNA and work in concert to generate RNA folding, modifications, rearrangements and cleavage as well as targeted degradation of pre-ribosomal RNA by the RNA exosome. Involved in nucleolar processing of pre-18S ribosomal RNA. Required for optimal pre-ribosomal RNA transcription by RNA polymerase I. The protein is WD repeat-containing protein 75 (wdr75) of Danio rerio (Zebrafish).